A 156-amino-acid chain; its full sequence is Small ribosomal subunit protein uS7 (156 aa).

Belongs to the universal ribosomal protein uS7 family. As to quaternary structure, part of the 30S ribosomal subunit. Contacts proteins S9 and S11.

In terms of biological role, one of the primary rRNA binding proteins, it binds directly to 16S rRNA where it nucleates assembly of the head domain of the 30S subunit. Is located at the subunit interface close to the decoding center, probably blocks exit of the E-site tRNA. This chain is Small ribosomal subunit protein uS7, found in Mycoplasma mobile (strain ATCC 43663 / 163K / NCTC 11711) (Mesomycoplasma mobile).